The sequence spans 104 residues: Large ribosomal subunit protein uL24 (104 aa).

Belongs to the universal ribosomal protein uL24 family. As to quaternary structure, part of the 50S ribosomal subunit.

Functionally, one of two assembly initiator proteins, it binds directly to the 5'-end of the 23S rRNA, where it nucleates assembly of the 50S subunit. One of the proteins that surrounds the polypeptide exit tunnel on the outside of the subunit. The protein is Large ribosomal subunit protein uL24 of Shewanella sediminis (strain HAW-EB3).